We begin with the raw amino-acid sequence, 331 residues long: Adenosine deaminase (331 aa).

Zn(2+) is bound by residues H12 and H14. Substrate contacts are provided by H14, D16, and G170. H197 contacts Zn(2+). E200 functions as the Proton donor in the catalytic mechanism. D278 provides a ligand contact to Zn(2+). D279 serves as a coordination point for substrate.

It belongs to the metallo-dependent hydrolases superfamily. Adenosine and AMP deaminases family. Adenosine deaminase subfamily. Zn(2+) is required as a cofactor.

It carries out the reaction adenosine + H2O + H(+) = inosine + NH4(+). The catalysed reaction is 2'-deoxyadenosine + H2O + H(+) = 2'-deoxyinosine + NH4(+). Functionally, catalyzes the hydrolytic deamination of adenosine and 2-deoxyadenosine. This Shewanella loihica (strain ATCC BAA-1088 / PV-4) protein is Adenosine deaminase.